A 475-amino-acid chain; its full sequence is Ribulose bisphosphate carboxylase large chain (475 aa).

Residues Asn-123 and Thr-173 each coordinate substrate. Lys-175 functions as the Proton acceptor in the catalytic mechanism. Lys-177 is a substrate binding site. Residues Lys-201, Asp-203, and Glu-204 each coordinate Mg(2+). Lys-201 bears the N6-carboxylysine mark. His-294 functions as the Proton acceptor in the catalytic mechanism. Positions 295, 327, and 379 each coordinate substrate.

This sequence belongs to the RuBisCO large chain family. Type I subfamily. Heterohexadecamer of 8 large chains and 8 small chains; disulfide-linked. The disulfide link is formed within the large subunit homodimers. Mg(2+) serves as cofactor. In terms of processing, the disulfide bond which can form in the large chain dimeric partners within the hexadecamer appears to be associated with oxidative stress and protein turnover.

The protein resides in the plastid. Its subcellular location is the chloroplast. It carries out the reaction 2 (2R)-3-phosphoglycerate + 2 H(+) = D-ribulose 1,5-bisphosphate + CO2 + H2O. The catalysed reaction is D-ribulose 1,5-bisphosphate + O2 = 2-phosphoglycolate + (2R)-3-phosphoglycerate + 2 H(+). Functionally, ruBisCO catalyzes two reactions: the carboxylation of D-ribulose 1,5-bisphosphate, the primary event in carbon dioxide fixation, as well as the oxidative fragmentation of the pentose substrate in the photorespiration process. Both reactions occur simultaneously and in competition at the same active site. The sequence is that of Ribulose bisphosphate carboxylase large chain from Euglena gracilis.